A 215-amino-acid chain; its full sequence is Thymidylate kinase (215 aa).

7-14 (GLDGSGKT) serves as a coordination point for ATP.

This sequence belongs to the thymidylate kinase family.

It catalyses the reaction dTMP + ATP = dTDP + ADP. Functionally, phosphorylation of dTMP to form dTDP in both de novo and salvage pathways of dTTP synthesis. The protein is Thymidylate kinase of Mycoplasmopsis agalactiae (strain NCTC 10123 / CIP 59.7 / PG2) (Mycoplasma agalactiae).